We begin with the raw amino-acid sequence, 121 residues long: Large ribosomal subunit protein eL34A (121 aa).

It belongs to the eukaryotic ribosomal protein eL34 family. In terms of assembly, component of the large ribosomal subunit (LSU). Mature yeast ribosomes consist of a small (40S) and a large (60S) subunit. The 40S small subunit contains 1 molecule of ribosomal RNA (18S rRNA) and 33 different proteins (encoded by 57 genes). The large 60S subunit contains 3 rRNA molecules (25S, 5.8S and 5S rRNA) and 46 different proteins (encoded by 81 genes).

The protein resides in the cytoplasm. In terms of biological role, component of the ribosome, a large ribonucleoprotein complex responsible for the synthesis of proteins in the cell. The small ribosomal subunit (SSU) binds messenger RNAs (mRNAs) and translates the encoded message by selecting cognate aminoacyl-transfer RNA (tRNA) molecules. The large subunit (LSU) contains the ribosomal catalytic site termed the peptidyl transferase center (PTC), which catalyzes the formation of peptide bonds, thereby polymerizing the amino acids delivered by tRNAs into a polypeptide chain. The nascent polypeptides leave the ribosome through a tunnel in the LSU and interact with protein factors that function in enzymatic processing, targeting, and the membrane insertion of nascent chains at the exit of the ribosomal tunnel. The sequence is that of Large ribosomal subunit protein eL34A from Saccharomyces cerevisiae (strain ATCC 204508 / S288c) (Baker's yeast).